A 540-amino-acid polypeptide reads, in one-letter code: Cytochrome P450 27C1 (540 aa).

A heme-binding site is contributed by C486.

This sequence belongs to the cytochrome P450 family. It depends on heme as a cofactor. In terms of tissue distribution, following L-thyroxine, expressed in the retinal pigment epithelium (at protein level).

The protein localises to the membrane. It carries out the reaction all-trans-retinol + 2 reduced [adrenodoxin] + O2 + 2 H(+) = all-trans-3,4-didehydroretinol + 2 oxidized [adrenodoxin] + 2 H2O. Functionally, efficiently catalyzes the conversion of all-trans retinol (also called vitamin A1, the precursor of 11-cis retinal) to 3,4-didehydroretinol (also called vitamin A2, the precursor of 11-cis 3,4-didehydroretinal). Also acts on all-trans retinal and all-trans retinoic acid. The replacement of 11-cis retinal chromophore in photopigments with 11-cis 3,4-didehydroretinal enhances sensitivity to long-wavelength light. This may improve vision in fresh water which is often turbid. The polypeptide is Cytochrome P450 27C1 (cyp27c1) (Danio rerio (Zebrafish)).